Reading from the N-terminus, the 361-residue chain is UDP-N-acetylglucosamine--N-acetylmuramyl-(pentapeptide) pyrophosphoryl-undecaprenol N-acetylglucosamine transferase (361 aa).

Residues 13 to 15 (TGG), asparagine 125, arginine 167, serine 196, isoleucine 251, 270 to 275 (ALTVTE), and glutamine 296 contribute to the UDP-N-acetyl-alpha-D-glucosamine site.

Belongs to the glycosyltransferase 28 family. MurG subfamily.

It localises to the cell inner membrane. The catalysed reaction is di-trans,octa-cis-undecaprenyl diphospho-N-acetyl-alpha-D-muramoyl-L-alanyl-D-glutamyl-meso-2,6-diaminopimeloyl-D-alanyl-D-alanine + UDP-N-acetyl-alpha-D-glucosamine = di-trans,octa-cis-undecaprenyl diphospho-[N-acetyl-alpha-D-glucosaminyl-(1-&gt;4)]-N-acetyl-alpha-D-muramoyl-L-alanyl-D-glutamyl-meso-2,6-diaminopimeloyl-D-alanyl-D-alanine + UDP + H(+). It participates in cell wall biogenesis; peptidoglycan biosynthesis. Its function is as follows. Cell wall formation. Catalyzes the transfer of a GlcNAc subunit on undecaprenyl-pyrophosphoryl-MurNAc-pentapeptide (lipid intermediate I) to form undecaprenyl-pyrophosphoryl-MurNAc-(pentapeptide)GlcNAc (lipid intermediate II). This chain is UDP-N-acetylglucosamine--N-acetylmuramyl-(pentapeptide) pyrophosphoryl-undecaprenol N-acetylglucosamine transferase, found in Psychrobacter arcticus (strain DSM 17307 / VKM B-2377 / 273-4).